The chain runs to 605 residues: Exo-beta-1,3-glucanase (605 aa).

The tract at residues 1–23 (MHVPPTDPARSAPPASPHRRRRP) is disordered. The signal sequence occupies residues 1–44 (MHVPPTDPARSAPPASPHRRRRPKALGLTALAAAMLMAVPTTQA). Residues glutamine 174, 194 to 196 (YGW), glutamine 217, 446 to 449 (WRAD), and 480 to 481 (EH) each bind substrate. Catalysis depends on glutamate 502, which acts as the Proton donor. A substrate-binding site is contributed by tyrosine 505.

Belongs to the glycosyl hydrolase 55 family.

The protein resides in the secreted. It carries out the reaction Successive hydrolysis of beta-D-glucose units from the non-reducing ends of (1-&gt;3)-beta-D-glucans, releasing alpha-glucose.. Functionally, exo-beta-1,3-glucanase that specifically hydrolyzes laminarin and laminarioligosaccharides, producing glucose and laminaribiose as end products. The sequence is that of Exo-beta-1,3-glucanase from Streptomyces sp. (strain SirexAA-E / ActE).